The sequence spans 130 residues: Protein ApaG (130 aa).

The ApaG domain maps to 3-127; sequence RALTRDIEVT…FSLDTPDLRR (125 aa).

This is Protein ApaG from Allorhizobium ampelinum (strain ATCC BAA-846 / DSM 112012 / S4) (Agrobacterium vitis (strain S4)).